Reading from the N-terminus, the 460-residue chain is Cysteine--tRNA ligase (460 aa).

Zn(2+) is bound at residue Cys28. A 'HIGH' region motif is present at residues 30–40 (MTVYDYCHLGH). Residues Cys209, His234, and Glu238 each contribute to the Zn(2+) site. The 'KMSKS' region signature appears at 266-270 (KMSKS). Lys269 is an ATP binding site.

Belongs to the class-I aminoacyl-tRNA synthetase family. As to quaternary structure, monomer. It depends on Zn(2+) as a cofactor.

The protein localises to the cytoplasm. It catalyses the reaction tRNA(Cys) + L-cysteine + ATP = L-cysteinyl-tRNA(Cys) + AMP + diphosphate. The protein is Cysteine--tRNA ligase of Pseudomonas entomophila (strain L48).